The following is a 178-amino-acid chain: Putative adenylate kinase (178 aa).

Glycine 10, glycine 12, lysine 13, serine 14, and serine 15 together coordinate ATP. The tract at residues 29 to 50 (TVVELAEKHGCIIDEEDGEIVI) is NMP. Positions 94–104 (GRNWSEEKLLE) are LID. Arginine 95 contacts ATP.

The protein belongs to the adenylate kinase family. AK6 subfamily. Interacts with uS11. Not a structural component of 40S pre-ribosomes, but transiently interacts with them by binding to uS11.

The enzyme catalyses AMP + ATP = 2 ADP. It catalyses the reaction ATP + H2O = ADP + phosphate + H(+). Broad-specificity nucleoside monophosphate (NMP) kinase that catalyzes the reversible transfer of the terminal phosphate group between nucleoside triphosphates and monophosphates. Also has ATPase activity. Involved in the late maturation steps of the 30S ribosomal particles, specifically 16S rRNA maturation. While NMP activity is not required for ribosome maturation, ATPase activity is. Associates transiently with small ribosomal subunit protein uS11. ATP hydrolysis breaks the interaction with uS11. May temporarily remove uS11 from the ribosome to enable a conformational change of the ribosomal RNA that is needed for the final maturation step of the small ribosomal subunit. This Archaeoglobus fulgidus (strain ATCC 49558 / DSM 4304 / JCM 9628 / NBRC 100126 / VC-16) protein is Putative adenylate kinase.